Here is a 226-residue protein sequence, read N- to C-terminus: PKHD-type hydroxylase PST_0995 (226 aa).

Residues 78–178 (KVFPPLFNCY…RLASFFWIQS (101 aa)) enclose the Fe2OG dioxygenase domain. The Fe cation site is built by His96, Asp98, and His159. 2-oxoglutarate is bound at residue Arg169.

The cofactor is Fe(2+). L-ascorbate is required as a cofactor.

This Stutzerimonas stutzeri (strain A1501) (Pseudomonas stutzeri) protein is PKHD-type hydroxylase PST_0995.